The primary structure comprises 147 residues: Plasminogen receptor (KT) (147 aa).

The Extracellular portion of the chain corresponds to 1–52 (MGFIFSKSMNENMKNQQEFMVMHARLQLERQLIMQNEMRERQMAMQIAWSRE). Residues 53 to 73 (FLKYFGTFFGIATISLAAGAI) traverse the membrane as a helical segment. Over 74–78 (KRKKP) the chain is Cytoplasmic. A helical transmembrane segment spans residues 79 to 99 (AFLIPIVPLSFIFTYQYDLGY). Residues 100–147 (GTLLQRMKSEAEDILETEKTKLELPKGLITFESLEKARREQSKFFSDK) lie on the Extracellular side of the membrane.

Interacts with PLAT. Interacts with PLAUR. As to expression, expressed in adrenal medulla (pheochromocytoma).

It is found in the cell membrane. In terms of biological role, receptor for plasminogen. Regulates urokinase plasminogen activator-dependent and stimulates tissue-type plasminogen activator-dependent cell surface plasminogen activation. Proposed to be part of a local catecholaminergic cell plasminogen activation system that regulates neuroendocrine prohormone processing. Involved in regulation of inflammatory response; regulates monocyte chemotactic migration and matrix metalloproteinase activation, such as of MMP2 and MMP9. The protein is Plasminogen receptor (KT) (Plgrkt) of Rattus norvegicus (Rat).